The sequence spans 82 residues: Hepcidin (82 aa).

An N-terminal signal peptide occupies residues 1-23; it reads MALSVQIRAACLLLLLLVSLTAG. Positions 24–53 are excised as a propeptide; that stretch reads SVLPSQTRQLTDLRTQDTAGATAGLTPVAQ. Cystine bridges form between C64–C80, C67–C70, C68–C76, and C71–C79.

The protein belongs to the hepcidin family. As to quaternary structure, interacts with SLC40A1; this interaction promotes SLC40A1 rapid ubiquitination.

It localises to the secreted. Functionally, liver-produced hormone that constitutes the main circulating regulator of iron absorption and distribution across tissues. Acts by promoting endocytosis and degradation of ferroportin/SLC40A1, leading to the retention of iron in iron-exporting cells and decreased flow of iron into plasma. Controls the major flows of iron into plasma: absorption of dietary iron in the intestine, recycling of iron by macrophages, which phagocytose old erythrocytes and other cells, and mobilization of stored iron from hepatocytes. Has strong antimicrobial activity against E.coli ML35P N.cinerea and weaker against S.epidermidis, S.aureus and group b streptococcus bacteria. Active against the fungus C.albicans. No activity against P.aeruginosa. This chain is Hepcidin (HAMP), found in Sus scrofa (Pig).